A 1197-amino-acid polypeptide reads, in one-letter code: ATP-dependent helicase/nuclease subunit A (1197 aa).

The region spanning 2 to 458 (RQWTKEQQAA…IDLAKNFRSR (457 aa)) is the UvrD-like helicase ATP-binding domain. 23–30 (AAAGSGKT) is an ATP binding site. The 290-residue stretch at 485–774 (RAALYQGTEF…RIMSIHKSKG (290 aa)) folds into the UvrD-like helicase C-terminal domain.

The protein belongs to the helicase family. AddA subfamily. Heterodimer of AddA and AddB/RexB. The cofactor is Mg(2+).

It carries out the reaction Couples ATP hydrolysis with the unwinding of duplex DNA by translocating in the 3'-5' direction.. The enzyme catalyses ATP + H2O = ADP + phosphate + H(+). The heterodimer acts as both an ATP-dependent DNA helicase and an ATP-dependent, dual-direction single-stranded exonuclease. Recognizes the chi site generating a DNA molecule suitable for the initiation of homologous recombination. The AddA nuclease domain is required for chi fragment generation; this subunit has the helicase and 3' -&gt; 5' nuclease activities. This is ATP-dependent helicase/nuclease subunit A from Alkaliphilus oremlandii (strain OhILAs) (Clostridium oremlandii (strain OhILAs)).